The chain runs to 444 residues: U4/U6 snRNA-associated-splicing factor PRP24 (444 aa).

Basic and acidic residues predominate over residues 1–16 (MEYGHHARPDSKRPLD). The tract at residues 1-29 (MEYGHHARPDSKRPLDEGSPAAAGLTSKK) is disordered. S19 carries the phosphoserine modification. RRM domains lie at 41-116 (TTVL…HLTE), 117-195 (CTLW…VSNP), and 210-289 (REIM…LADK).

In terms of assembly, monomer. Interacts with U6 snRNA SNR6 and the LSM2-8 complex (small nuclear RNA); to chaperone formation of the U4/U6-U5 tri-snRNP (small nuclear ribonucleoprotein) assembly, the protein is displaced from the U4/U6 snRNP once pairing is complete.

The protein resides in the nucleus. Functions as a recycling factor of the spliceosome, a machinery that forms on each precursor-messenger RNA (pre-mRNA) and catalyzes the removal of introns. Chaperones the re-annealing of U4 and U6 snRNAs (small nuclear RNAs) released from previous rounds of splicing, an initial step in reforming the U4/U6-U5 tri-snRNP (small nuclear ribonucleoprotein) that can reassemble into another spliceosome complex; this step involves binding U6 and facilitating the unwinding of the U6 internal stem loop, followed by base-pairing of U6 to U4. This Saccharomyces cerevisiae (strain ATCC 204508 / S288c) (Baker's yeast) protein is U4/U6 snRNA-associated-splicing factor PRP24 (PRP24).